The primary structure comprises 92 residues: N(2)-fixation sustaining protein CowN (92 aa).

It belongs to the CowN family.

In terms of biological role, is required to sustain N(2)-dependent growth in the presence of low levels of carbon monoxide (CO). Probably acts by protecting the N(2) fixation ability of the nitrogenase complex, which is inactivated in the presence of CO. This chain is N(2)-fixation sustaining protein CowN, found in Rhodopseudomonas palustris (strain HaA2).